The chain runs to 146 residues: MGRFISVSFGLLVVFLSLSGTGADCLPDWSPYQGHCYRVFNQKMTWADAEKFCTEQANGGHLASFHSSKEVDFMVSLAFPMLKVDFVWIGMSDFWRDCEWKWSDGAKLDYKAWNNELNCFVSKTTDNQWLRWDCSRTNNVACKYPL.

Residues 1–23 (MGRFISVSFGLLVVFLSLSGTGA) form the signal peptide. 3 disulfide bridges follow: cysteine 25–cysteine 36, cysteine 53–cysteine 142, and cysteine 119–cysteine 134. The region spanning 32–143 (YQGHCYRVFN…CSRTNNVACK (112 aa)) is the C-type lectin domain.

It belongs to the snaclec family. Heterodimer; disulfide-linked. Expressed by the venom gland.

The protein resides in the secreted. Functionally, interferes with one step of hemostasis (modulation of platelet aggregation, or coagulation cascade, for example). The polypeptide is Snaclec CTL-Eoc124 (Echis ocellatus (Ocellated saw-scaled viper)).